The sequence spans 2541 residues: Talin-1 (2541 aa).

Residues 86-403 (RPLKIRMLDG…GYIDIILKKK (318 aa)) form the FERM domain. At Thr167 the chain carries Phosphothreonine. Residues 280–435 (FQAHKNCGQM…PKKSTVLQQQ (156 aa)) are interaction with LAYN. 5 positions are modified to phosphoserine: Ser405, Ser425, Ser446, Ser620, and Ser729. Residues 482–655 (RGHMPPLTSA…QASGELLQQI (174 aa)) form a helical bundle R1 region. The helical bundle R2 stretch occupies residues 656–786 (GESDTDPHFQ…ALNELLQHVK (131 aa)). The interval 787–911 (AHATGAGPAG…NAAAQNAIKK (125 aa)) is helical bundle R3. The interval 913-1044 (LVQRLEHAAK…RTAAQKAQEA (132 aa)) is helical bundle R4. A Phosphoserine modification is found at Ser1021. Residues 1046-1206 (GPLEMDSALS…NRCVSCLPGQ (161 aa)) form a helical bundle R5 region. Tyr1116 carries the post-translational modification Phosphotyrosine. The residue at position 1142 (Thr1142) is a Phosphothreonine. A phosphoserine mark is found at Ser1201 and Ser1225. The tract at residues 1207–1357 (RDVDNALRAV…QLITMCTQQA (151 aa)) is helical bundle R6. Thr1263 bears the Phosphothreonine mark. Ser1323 is subject to Phosphoserine. The interaction with SYNM stretch occupies residues 1327–1948 (AAPNLKSQLA…CSPSDAYTKK (622 aa)). The tract at residues 1358-1453 (PGQKECDNAL…AYLVGVSDPN (96 aa)) is helical bundle R7A. Residues 1359 to 1659 (GQKECDNALR…SMRDKAPGQL (301 aa)) form an interaction with VCL and F-actin region. A helical bundle R8 region spans residues 1461–1580 (LVEPTQFARA…NLSAFASNPE (120 aa)). Lys1544 is subject to N6-acetyllysine. The interval 1581-1653 (FSSIPAQISP…IKKLITSMRD (73 aa)) is helical bundle R7B. The segment at 1655–1822 (APGQLECETA…TLNEAASAAG (168 aa)) is helical bundle R9. A helical bundle R10 region spans residues 1823-1973 (VVGGMVDSIT…VLAALQAGNR (151 aa)). Ser1849 bears the Phosphoserine mark. Residue Thr1855 is modified to Phosphothreonine. Phosphoserine is present on Ser1878. The interval 1974-2140 (GTQACITAAS…TVKAVEDEAT (167 aa)) is helical bundle R11. Lys2031 bears the N6-acetyllysine mark. Phosphoserine is present on Ser2040. Lys2115 carries the post-translational modification N6-acetyllysine. A helical bundle R12 region spans residues 2141-2294 (KGTRALEATT…QAAEAMKGTE (154 aa)). The 241-residue stretch at 2293 to 2533 (TEWVDPEDPT…QIRQQQYKFL (241 aa)) folds into the I/LWEQ domain. Residues 2300–2482 (DPTVIAENEL…AAQKAAAFEE (183 aa)) form a helical bundle R13 region.

Part of a complex composed of THSD1, PTK2/FAK1, TLN1 and VCL. Interacts with THSD1; this promotes interaction with PTK2/FAK1 and VCL. Binds with high affinity to VCL and with low affinity to integrins. Interacts with APBB1IP; this inhibits VCL binding. Interacts with PTK2/FAK1. Interacts with PIP5K1C and NRAP. Interacts with LAYN. Interacts with SYNM. Interacts with ITGB1; the interaction is prevented by competitive binding of ITGB1BP1. Interacts with SVEP1. Interacts (via R7 domain) with KANK1 or KANK2 (via KN motif); this interaction likely initiates the assembly of cortical microtubule stabilization complexes (CMSCs) at the vicinity of focal adhesions. In terms of assembly, interacts with VCL; shows reduced VCL binding compared to isoform 2. Interacts with APBB1IP; shows similar level of binding compared to isoform 2. As to quaternary structure, interacts with VCL; shows enhanced VCL binding compared to isoform 1. Interacts with APBB1IP; shows similar level of binding compared to isoform 1. (Microbial infection) Interacts with human cytomegalovirus protein UL135. In terms of tissue distribution, expressed at low to non-detectable levels in many tissues but highly expressed in skin and pancreas with other tissues including kidney cortex, endocervix, testis, pituitary, liver, and spleen also showing robust expression.

Its subcellular location is the cell projection. The protein resides in the ruffle membrane. It localises to the cytoplasm. The protein localises to the cytoskeleton. It is found in the cell surface. Its subcellular location is the cell junction. The protein resides in the focal adhesion. In terms of biological role, high molecular weight cytoskeletal protein concentrated at regions of cell-matrix and cell-cell contacts. Involved in connections of major cytoskeletal structures to the plasma membrane. With KANK1 co-organize the assembly of cortical microtubule stabilizing complexes (CMSCs) positioned to control microtubule-actin crosstalk at focal adhesions (FAs) rims. This is Talin-1 (TLN1) from Homo sapiens (Human).